A 368-amino-acid chain; its full sequence is Serine/threonine-protein phosphatase PP2A-like PPG1 (368 aa).

Mn(2+)-binding residues include Asp-50, His-52, Asp-78, and Asn-110. Catalysis depends on His-111, which acts as the Proton donor. Mn(2+)-binding residues include His-161 and His-247.

This sequence belongs to the PPP phosphatase family. PP-2A subfamily. As to quaternary structure, inactivated in a complex with phosphatase methylesterase PPE1 (PP2Ai). Interacts with phosphatase 2A activator RRD1, which can reactivate PP2Ai by dissociating the catalytic subunit from the complex. Interacts with TAP42. The cofactor is Mn(2+). In terms of processing, reversibly methyl esterified on Leu-368 by leucine carboxyl methyltransferase 1 (PPM1) and protein phosphatase methylesterase 1 (PPE1). Carboxyl methylation influences the affinity of the catalytic subunit for the different regulatory subunits, thereby modulating the PP2A holoenzyme's substrate specificity, enzyme activity and cellular localization.

It carries out the reaction O-phospho-L-seryl-[protein] + H2O = L-seryl-[protein] + phosphate. It catalyses the reaction O-phospho-L-threonyl-[protein] + H2O = L-threonyl-[protein] + phosphate. Involved in glycogen accumulation. The sequence is that of Serine/threonine-protein phosphatase PP2A-like PPG1 (PPG1) from Saccharomyces cerevisiae (strain ATCC 204508 / S288c) (Baker's yeast).